The sequence spans 892 residues: LEAF RUST 10 DISEASE-RESISTANCE LOCUS RECEPTOR-LIKE PROTEIN KINASE-like 2.8 (892 aa).

Residues 1–27 (MYYHSLSSYSILFFLFSLFHHLPCASS) form the signal peptide. Topologically, residues 28–496 (NQGLGWCESL…RFIATLVRYT (469 aa)) are extracellular. 12 N-linked (GlcNAc...) asparagine glycosylation sites follow: N42, N71, N88, N112, N186, N222, N230, N286, N358, N384, N407, and N458. The helical transmembrane segment at 497–517 (FIALGALTGVVIVFLVLLCPC) threads the bilayer. Topologically, residues 518–892 (FRVQIFRKRK…TNSKLESSSL (375 aa)) are cytoplasmic. Residue T547 is modified to Phosphothreonine. In terms of domain architecture, Protein kinase spans 556 to 854 (KSFTEVVGRG…ALEVPPRPVL (299 aa)). Residues 562 to 570 (VGRGGFGIV) and K584 each bind ATP. Y629 is modified (phosphotyrosine). D680 functions as the Proton acceptor in the catalytic mechanism. Residues T717 and T720 each carry the phosphothreonine modification.

The protein belongs to the protein kinase superfamily. Ser/Thr protein kinase family.

It is found in the membrane. The catalysed reaction is L-seryl-[protein] + ATP = O-phospho-L-seryl-[protein] + ADP + H(+). It catalyses the reaction L-threonyl-[protein] + ATP = O-phospho-L-threonyl-[protein] + ADP + H(+). In Arabidopsis thaliana (Mouse-ear cress), this protein is LEAF RUST 10 DISEASE-RESISTANCE LOCUS RECEPTOR-LIKE PROTEIN KINASE-like 2.8.